We begin with the raw amino-acid sequence, 300 residues long: Ribonuclease HIII (300 aa).

The RNase H type-2 domain occupies 83-300; it reads IPIIGSDEVG…THKAQALLTK (218 aa). 3 residues coordinate a divalent metal cation: aspartate 89, glutamate 90, and aspartate 194.

It belongs to the RNase HII family. RnhC subfamily. The cofactor is Mn(2+). Requires Mg(2+) as cofactor.

The protein resides in the cytoplasm. It carries out the reaction Endonucleolytic cleavage to 5'-phosphomonoester.. Its function is as follows. Endonuclease that specifically degrades the RNA of RNA-DNA hybrids. The chain is Ribonuclease HIII from Streptococcus pyogenes serotype M3 (strain ATCC BAA-595 / MGAS315).